A 1583-amino-acid chain; its full sequence is Transcriptional activator GLI3 (1583 aa).

Met-1 is subject to N-acetylmethionine. Polar residues-rich tracts occupy residues 1-10 (MEAQAHSSTA) and 58-78 (ITMQ…PSTS). A disordered region spans residues 1–78 (MEAQAHSSTA…NKISEEPSTS (78 aa)). At Arg-175 the chain carries Omega-N-methylarginine. Residues 368–475 (QSLGSAFGHS…DKDESKQEPE (108 aa)) form a disordered region. Positions 403-421 (VQVSSGPSESSQSKPTSES) are enriched in low complexity. Lys-438 is covalently cross-linked (Glycyl lysine isopeptide (Lys-Gly) (interchain with G-Cter in SUMO2)). Residues 448-457 (SRGQQEQPEG) show a composition bias toward polar residues. The span at 461–474 (VKEEADKDESKQEP) shows a compositional bias: basic and acidic residues. A Glycyl lysine isopeptide (Lys-Gly) (interchain with G-Cter in SUMO2) cross-link involves residue Lys-462. 5 consecutive C2H2-type zinc fingers follow at residues 480–505 (TNCH…NNDH), 513–540 (FVCR…MRRH), 546–570 (HKCT…LRSH), 576–601 (YVCE…NRTH), and 607–632 (YVCK…KTVH). The disordered stretch occupies residues 620–728 (DPSSLRKHVK…PISNYSNSGL (109 aa)). A compositionally biased stretch (basic and acidic residues) spans 632–648 (HGPEAHVTKKQRGDMHP). Position 664 is a phosphoserine (Ser-664). Over residues 684–699 (SKREECLQVKTVKAEK) the composition is skewed to basic and acidic residues. Low complexity predominate over residues 703–726 (SQPSPGGQSSCSSQQSPISNYSNS). The interval 745-845 (DETPIMDSTI…VDFTVLNTLN (101 aa)) is mediates interaction with DZIP1. A Glycyl lysine isopeptide (Lys-Gly) (interchain with G-Cter in ubiquitin) cross-link involves residue Lys-773. A Glycyl lysine isopeptide (Lys-Gly) (interchain with G-Cter in SUMO2); alternate cross-link involves residue Lys-779. A Glycyl lysine isopeptide (Lys-Gly) (interchain with G-Cter in ubiquitin); alternate cross-link involves residue Lys-779. Residues Lys-784 and Lys-800 each participate in a glycyl lysine isopeptide (Lys-Gly) (interchain with G-Cter in ubiquitin) cross-link. The tract at residues 809-828 (GNGTQSNNNYSSGGPGTLLP) is disordered. Residues 810 to 820 (NGTQSNNNYSS) show a composition bias toward polar residues. Phosphoserine; by PKA occurs at positions 849, 865, 877, 907, 980, and 1006. Low complexity predominate over residues 863–880 (RSSGISPCFSSRRSSEAS). A disordered region spans residues 863-918 (RSSGISPCFSSRRSSEASQAEGRPQNVSVADSYDPISTDASRRSSEASQGDGLPSL). Residues 1164-1189 (EVSSGTSDLSSSKLKCGQQRPSAQQP) are disordered. Low complexity predominate over residues 1166-1175 (SSGTSDLSSS).

Belongs to the GLI C2H2-type zinc-finger protein family. In terms of assembly, the phosphorylated form interacts with BTRC. The full-length GLI3 form (GLI3FL) interacts with SUFU and this interaction regulates the formation of either repressor or activator forms of GLI3. Its association with SUFU is regulated by Hh signaling and dissociation of the SUFU-GLI3 interaction requires the presence of the ciliary motor KIF3A. Interacts with KIF7. The activator form of GLI3 (GLI3A) but not the repressor form (GLI3R) can interact with TRPS1. Interacts with ZIC1. Interacts with ZIC3 (via C2H2-type domains 3, 4 and 5); the interaction enhances its transcriptional activity. Interacts with WRD11; the interaction associates EMX1 with GLI3. Interacts with DZIP1; retains GLI3 within the cytoplasm. Post-translationally, phosphorylated by DYRK2 (in vitro). Phosphorylated on multiple sites by protein kinase A (PKA) and phosphorylation by PKA primes further phosphorylation by CK1 and GSK3. Phosphorylation is essential for its proteolytic processing. In terms of processing, transcriptional repressor GLI3R, a C-terminally truncated form, is generated from the full-length GLI3 protein (GLI3FL/GLI3-190) through proteolytic processing. This process requires PKA-primed phosphorylation of GLI3, ubiquitination of GLI3 and the presence of BTRC. GLI3FL is complexed with SUFU in the cytoplasm and is maintained in a neutral state. Without the Hh signal, the SUFU-GLI3 complex is recruited to cilia, leading to the efficient processing of GLI3FL into GLI3R. GLI3R formation leads to its dissociation from SUFU, allowing it to translocate into the nucleus, and repress Hh target genes. When Hh signaling is initiated, SUFU dissociates from GLI3FL and this has two consequences. First, GLI3R production is halted. Second, free GLI3FL translocates to the nucleus, where it is phosphorylated, destabilized, and converted to a transcriptional activator (GLI3A). Phosphorylated in vitro by ULK3.

The protein localises to the nucleus. It localises to the cytoplasm. Its subcellular location is the cell projection. It is found in the cilium. In terms of biological role, has a dual function as a transcriptional activator and a repressor of the sonic hedgehog (Shh) pathway, and plays a role in limb development. The full-length GLI3 form (GLI3FL) after phosphorylation and nuclear translocation, acts as an activator (GLI3A) while GLI3R, its C-terminally truncated form, acts as a repressor. A proper balance between the GLI3 activator and the repressor GLI3R, rather than the repressor gradient itself or the activator/repressor ratio gradient, specifies limb digit number and identity. In concert with TRPS1, plays a role in regulating the size of the zone of distal chondrocytes, in restricting the zone of PTHLH expression in distal cells and in activating chondrocyte proliferation. Binds to the minimal GLI-consensus sequence 5'-GGGTGGTC-3'. In Mus musculus (Mouse), this protein is Transcriptional activator GLI3 (Gli3).